The primary structure comprises 949 residues: AP-1 complex subunit beta-1 (949 aa).

Lys318 carries the N6-acetyllysine modification. Tyr574 bears the 3'-nitrotyrosine mark. A disordered region spans residues 592 to 623; sequence SLPPRTASSESTESPEAAPAGAPASDQPDVIP. The segment covering 594 to 616 has biased composition (low complexity); sequence PPRTASSESTESPEAAPAGAPAS.

This sequence belongs to the adaptor complexes large subunit family. Adaptor protein complex 1 (AP-1) is a heterotetramer composed of two large adaptins (gamma-type subunit AP1G1 and beta-type subunit AP1B1), a medium adaptin (mu-type subunit AP1M1 or AP1M2) and a small adaptin (sigma-type subunit AP1S1 or AP1S2 or AP1S3). Post-translationally, the N-terminus is blocked.

It localises to the golgi apparatus. The protein resides in the cytoplasmic vesicle. The protein localises to the clathrin-coated vesicle membrane. Its function is as follows. Subunit of clathrin-associated adaptor protein complex 1 that plays a role in protein sorting in the late-Golgi/trans-Golgi network (TGN) and/or endosomes. The AP complexes mediate both the recruitment of clathrin to membranes and the recognition of sorting signals within the cytosolic tails of transmembrane cargo molecules. This Rattus norvegicus (Rat) protein is AP-1 complex subunit beta-1 (Ap1b1).